The chain runs to 541 residues: Valine N-monooxygenase 2 (541 aa).

Over 1–18 (MAMNVSTTATTTASFAST) the chain is Cytoplasmic. Residues 19–41 (SSMNNTAKILLITLFISIVSTVI) traverse the membrane as a helical segment. Over 42 to 541 (KLQKRASYKK…LAPHLYPTSP (500 aa)) the chain is Lumenal. A glycan (N-linked (GlcNAc...) asparagine) is linked at asparagine 277. Cysteine 477 lines the heme pocket. N-linked (GlcNAc...) asparagine glycosylation occurs at asparagine 505.

The protein belongs to the cytochrome P450 family. The cofactor is heme. Expressed in the epidermis, the next two cortex cell layers, the endodermis and the pericycle of leaf petioles. Strong expression around the laticifers among the phloem cells and in parenchymatic cells between the protoxylem and the metaxylem cells. In the leaves, preferentially expressed in the mesophyll cells adjacent to the epidermis.

The protein resides in the microsome membrane. The enzyme catalyses L-valine + 2 reduced [NADPH--hemoprotein reductase] + 2 O2 = (E)-2-methylpropanal oxime + 2 oxidized [NADPH--hemoprotein reductase] + CO2 + 3 H2O + 2 H(+). The catalysed reaction is L-valine + reduced [NADPH--hemoprotein reductase] + O2 = N-hydroxy-L-valine + oxidized [NADPH--hemoprotein reductase] + H2O + 2 H(+). It catalyses the reaction N-hydroxy-L-valine + reduced [NADPH--hemoprotein reductase] + O2 = N,N-dihydroxy-L-valine + oxidized [NADPH--hemoprotein reductase] + H2O + H(+). It carries out the reaction L-isoleucine + 2 reduced [NADPH--hemoprotein reductase] + 2 O2 = (1E,2S)-2-methylbutanal oxime + 2 oxidized [NADPH--hemoprotein reductase] + CO2 + 3 H2O + 2 H(+). The enzyme catalyses L-isoleucine + reduced [NADPH--hemoprotein reductase] + O2 = N-hydroxy-L-isoleucine + oxidized [NADPH--hemoprotein reductase] + H2O + 2 H(+). The catalysed reaction is N-hydroxy-L-isoleucine + reduced [NADPH--hemoprotein reductase] + O2 = N,N-dihydroxy-L-isoleucine + oxidized [NADPH--hemoprotein reductase] + H2O + H(+). Involved in the biosynthesis of the cyanogenic glucosides linamarin and lotaustralin. Can use L-valine or L-isoleucine as substrate. Catalyzes multi-step reactions starting with two successive N-hydroxylations using L-valine and L-isoleucine as substrates leading to the formation of N,N-dihydroxy-L-valine and N,N-dihydroxy-L-isoleucine, respectively; following spontaneous reactions lead to the production of (E)-2-methylpropanal oxime and (1E,2S)-2-methylbutanal oxime, respectively. This Manihot esculenta (Cassava) protein is Valine N-monooxygenase 2.